A 381-amino-acid polypeptide reads, in one-letter code: Creatine kinase M-type (381 aa).

The 88-residue stretch at 11–98 (KLNFKAEEEY…FDPIIQDRHG (88 aa)) folds into the Phosphagen kinase N-terminal domain. The Phosphagen kinase C-terminal domain maps to 125 to 367 (YVLSSRVRTG…KLMVEMEKKL (243 aa)). Residue 128 to 132 (SSRVR) participates in ATP binding. Serine 164 is subject to Phosphoserine. The residue at position 166 (threonine 166) is a Phosphothreonine. Residue serine 178 is modified to Phosphoserine. Threonine 180 is subject to Phosphothreonine. Histidine 191 lines the ATP pocket. Residue serine 199 is modified to Phosphoserine. The ATP site is built by arginine 236 and arginine 292. 2 positions are modified to phosphothreonine: threonine 313 and threonine 322. Residues 320-325 (RGTGGV) and aspartate 335 each bind ATP. Serine 372 is modified (phosphoserine).

It belongs to the ATP:guanido phosphotransferase family. Dimer of identical or non-identical chains, which can be either B (brain type) or M (muscle type). With MM being the major form in skeletal muscle and myocardium, MB existing in myocardium, and BB existing in many tissues, especially brain.

It catalyses the reaction creatine + ATP = N-phosphocreatine + ADP + H(+). In terms of biological role, reversibly catalyzes the transfer of phosphate between ATP and various phosphogens (e.g. creatine phosphate). Creatine kinase isoenzymes play a central role in energy transduction in tissues with large, fluctuating energy demands, such as skeletal muscle, heart, brain and spermatozoa. This chain is Creatine kinase M-type (CKM), found in Sus scrofa (Pig).